The following is a 240-amino-acid chain: MKMMDANEIIEFISKSEKKTPVKVYIKGQLDNLSFGEGVQSFINGNTGVVFGEWSEIEAVLNENAALIEDTVVENDRRYSAIPLLDLKGVEARIEPGAIIRDQVEIGKGAVIMMGASINIGAVIGEGTMIDMNAVLGGRATVGKNCHVGAGAVLAGVIEPPSASPVIIEDGVVIGANAVILEGVRVGAGAVVAAGAIVTEDVPANTVVAGTPARVIKEIDEKTKGKTEIKLELRRLNEDQ.

This sequence belongs to the transferase hexapeptide repeat family. DapH subfamily.

It catalyses the reaction (S)-2,3,4,5-tetrahydrodipicolinate + acetyl-CoA + H2O = L-2-acetamido-6-oxoheptanedioate + CoA. Its pathway is amino-acid biosynthesis; L-lysine biosynthesis via DAP pathway; LL-2,6-diaminopimelate from (S)-tetrahydrodipicolinate (acetylase route): step 1/3. Catalyzes the transfer of an acetyl group from acetyl-CoA to tetrahydrodipicolinate. This chain is 2,3,4,5-tetrahydropyridine-2,6-dicarboxylate N-acetyltransferase, found in Shouchella clausii (strain KSM-K16) (Alkalihalobacillus clausii).